The sequence spans 163 residues: ATP synthase subunit b (163 aa).

The chain crosses the membrane as a helical span at residues 10 to 29; that stretch reads VFMQMFHFLLMLVVLRLFAY.

The protein belongs to the ATPase B chain family. In terms of assembly, F-type ATPases have 2 components, F(1) - the catalytic core - and F(0) - the membrane proton channel. F(1) has five subunits: alpha(3), beta(3), gamma(1), delta(1), epsilon(1). F(0) has three main subunits: a(1), b(2) and c(10-14). The alpha and beta chains form an alternating ring which encloses part of the gamma chain. F(1) is attached to F(0) by a central stalk formed by the gamma and epsilon chains, while a peripheral stalk is formed by the delta and b chains.

It localises to the cell membrane. Its function is as follows. F(1)F(0) ATP synthase produces ATP from ADP in the presence of a proton or sodium gradient. F-type ATPases consist of two structural domains, F(1) containing the extramembraneous catalytic core and F(0) containing the membrane proton channel, linked together by a central stalk and a peripheral stalk. During catalysis, ATP synthesis in the catalytic domain of F(1) is coupled via a rotary mechanism of the central stalk subunits to proton translocation. Functionally, component of the F(0) channel, it forms part of the peripheral stalk, linking F(1) to F(0). In Desulforudis audaxviator (strain MP104C), this protein is ATP synthase subunit b.